We begin with the raw amino-acid sequence, 303 residues long: Probable 5-dehydro-4-deoxyglucarate dehydratase (303 aa).

The protein belongs to the DapA family.

The catalysed reaction is 5-dehydro-4-deoxy-D-glucarate + H(+) = 2,5-dioxopentanoate + CO2 + H2O. It participates in carbohydrate acid metabolism; D-glucarate degradation; 2,5-dioxopentanoate from D-glucarate: step 2/2. The chain is Probable 5-dehydro-4-deoxyglucarate dehydratase from Variovorax paradoxus (strain S110).